A 251-amino-acid polypeptide reads, in one-letter code: Adapter protein MecA (251 aa).

It belongs to the MecA family. In terms of assembly, homodimer.

In terms of biological role, enables the recognition and targeting of unfolded and aggregated proteins to the ClpC protease or to other proteins involved in proteolysis. The chain is Adapter protein MecA from Streptococcus agalactiae serotype Ia (strain ATCC 27591 / A909 / CDC SS700).